Consider the following 148-residue polypeptide: Putative cyclin-dependent kinase inhibitor SPL2 (148 aa).

Phosphoserine is present on residues Ser-59 and Ser-86.

The protein resides in the cytoplasmic granule. It localises to the cytoplasm. In terms of biological role, putative cyclin-dependent kinase (CDK) inhibitor necessary and sufficient for PHO pathway-dependent down-regulation of low-affinity phosphate transport. The chain is Putative cyclin-dependent kinase inhibitor SPL2 (SPL2) from Saccharomyces cerevisiae (strain YJM789) (Baker's yeast).